The following is a 160-amino-acid chain: Major pollen allergen Bet v 1-C (160 aa).

Lysine 55, tyrosine 82, tyrosine 84, and asparagine 101 together coordinate brassinolide.

It belongs to the BetVI family.

It localises to the cytoplasm. Its function is as follows. May be a general steroid carrier protein. This chain is Major pollen allergen Bet v 1-C (BETV1C), found in Betula pendula (European white birch).